The chain runs to 196 residues: Ribosome maturation factor RimP (196 aa).

Belongs to the RimP family.

The protein localises to the cytoplasm. In terms of biological role, required for maturation of 30S ribosomal subunits. This is Ribosome maturation factor RimP from Dinoroseobacter shibae (strain DSM 16493 / NCIMB 14021 / DFL 12).